A 222-amino-acid chain; its full sequence is UPF0758 protein YicR (222 aa).

An MPN domain is found at 100–222; sequence PLLSPEMTRE…NVSFAERGWI (123 aa). Residues H171, H173, and D184 each coordinate Zn(2+). The JAMM motif motif lies at 171-184; it reads HNHPSGCAEPSKAD.

This sequence belongs to the UPF0758 family. YicR subfamily.

In Shigella boydii serotype 18 (strain CDC 3083-94 / BS512), this protein is UPF0758 protein YicR.